The primary structure comprises 547 residues: MGPHAGPGMLLLLLGFLRISAAKYVRGNLTTKEDWVFLTRFCFLSDYGRLEFKFKYPEAKCCQNILLYFDDTSQWPAVYKKDNKDCLMKESVIRPENNQVINLTTQYVWSGCQVIKEAGQSYLSCNSGRSFRSVRERWWYIALSKCGGDGLQLEYEMTLTNGKSFWTRHFSADEFGILETDITFLLIFILILLLSCYFGYILRGRQLLHTTYKMFMAAAGVEVLSLLLFCVYWGQYAQDGVGNSSIKVLAKLLFSASFLIFLLMLILLGKGFTVTRGRISHLGSIKLSVYMTLYTVTHTVLFIHEAQFFDPAQVLYTYESPAGYGNIALQFLAYIWFCYAVLVTLKHFPEKQAFYVPFFAAYTLWFFAVPVMALIANFGIPKWAREKIVNGIQLGIHLYAHAVFLIITRPSAANKNFPYHVRTSQIGIMEQSTEKFPHHVYGNVTFISDSVPNVTELFSIPSSNGSSAGITKPVPYPVTLGQCYSQLTSDSHQVISPPLLNGVPGVQKVPVGETQLGGLQQLHAPQIHHQNGFPEYFSIRSAGPQPM.

Residues 2–22 (GPHAGPGMLLLLLGFLRISAA) form a helical membrane-spanning segment. N-linked (GlcNAc...) asparagine glycosylation is found at Asn28 and Asn102. A run of 2 helical transmembrane segments spans residues 182-202 (ITFLLIFILILLLSCYFGYIL) and 214-234 (MFMAAAGVEVLSLLLFCVYWG). Asn243 carries an N-linked (GlcNAc...) asparagine glycan. 5 helical membrane-spanning segments follow: residues 248-268 (VLAKLLFSASFLIFLLMLILL), 283-303 (GSIKLSVYMTLYTVTHTVLFI), 325-345 (GNIALQFLAYIWFCYAVLVTL), 356-376 (VPFFAAYTLWFFAVPVMALIA), and 388-408 (IVNGIQLGIHLYAHAVFLIIT). N-linked (GlcNAc...) asparagine glycosylation is found at Asn443, Asn453, and Asn464.

Its subcellular location is the membrane. The polypeptide is Transmembrane protein 145 (tmem145) (Xenopus laevis (African clawed frog)).